The sequence spans 478 residues: MGRCCFYTAGTLSLLLLVTSVTLLVARVFQKAVDQSIEKKIVLRNGTEAFDSWEKPPLPVYTQFYFFNVTNPEEILRGETPRVEEVGPYTYRELRNKANIQFGDNGTTISAVSNKAYVFERDQSVGDPKIDLIRTLNIPVLTVIEWSQVHFLREIIEAMLKAYQQKLFVTHTVDELLWGYKDEILSLIHVFRPDISPYFGLFYEKNGTNDGDYVFLTGEDSYLNFTKIVEWNGKTSLDWWITDKCNMINGTDGDSFHPLITKDEVLYVFPSDFCRSVYITFSDYESVQGLPAFRYKVPAEILANTSDNAGFCIPEGNCLGSGVLNVSICKNGAPIIMSFPHFYQADERFVSAIEGMHPNQEDHETFVDINPLTGIILKAAKRFQINIYVKKLDDFVETGDIRTMVFPVMYLNESVHIDKETASRLKSMINTTLIITNIPYIIMALGVFFGLVFTWLACKGQGSMDEGTADERAPLIRT.

At 1 to 4 (MGRC) the chain is on the cytoplasmic side. A helical membrane pass occupies residues 5–27 (CFYTAGTLSLLLLVTSVTLLVAR). The Lumenal segment spans residues 28 to 433 (VFQKAVDQSI…RLKSMINTTL (406 aa)). 3 N-linked (GlcNAc...) asparagine glycosylation sites follow: Asn45, Asn68, and Asn105. Residues 155-191 (IIEAMLKAYQQKLFVTHTVDELLWGYKDEILSLIHVF) are important for interaction with GBA1. N-linked (GlcNAc...) asparagine glycans are attached at residues Asn206, Asn224, Asn249, and Asn304. Intrachain disulfides connect Cys274–Cys329 and Cys312–Cys318. N-linked (GlcNAc...) asparagine glycosylation is found at Asn325, Asn412, and Asn430. A helical transmembrane segment spans residues 434–459 (IITNIPYIIMALGVFFGLVFTWLACK). Topologically, residues 460 to 478 (GQGSMDEGTADERAPLIRT) are cytoplasmic.

Belongs to the CD36 family. Interacts with GBA1. As to quaternary structure, (Microbial infection) Interacts with enterovirus 71 capsid proteins VP1 and VP2.

Its subcellular location is the lysosome membrane. Acts as a lysosomal receptor for glucosylceramidase (GBA1) targeting. Functionally, (Microbial infection) Acts as a receptor for enterovirus 71. The sequence is that of Lysosome membrane protein 2 (SCARB2) from Homo sapiens (Human).